Here is a 143-residue protein sequence, read N- to C-terminus: Period circadian protein (143 aa).

Positions 25–130 (NSKPVTAPTQ…GPSLAADNSI (106 aa)) are disordered. Composition is skewed to low complexity over residues 71-93 (SGNCTTNSNIRMSSFTNTSITGT) and 114-126 (GGAAADAGPSLAA).

In terms of assembly, forms a heterodimer with timeless (TIM); the complex then translocates into the nucleus. Post-translationally, phosphorylated with a circadian rhythmicity, probably by the double-time protein (dbt). Phosphorylation could be implicated in the stability of per monomer and in the formation of heterodimer per-tim.

Its subcellular location is the nucleus. The protein localises to the cytoplasm. It is found in the perinuclear region. Functionally, essential for biological clock functions. Determines the period length of circadian and ultradian rhythms; an increase in PER dosage leads to shortened circadian rhythms and a decrease leads to lengthened circadian rhythms. Essential for the circadian rhythmicity of locomotor activity, eclosion behavior, and for the rhythmic component of the male courtship song that originates in the thoracic nervous system. The biological cycle depends on the rhythmic formation and nuclear localization of the TIM-PER complex. Light induces the degradation of TIM, which promotes elimination of PER. Nuclear activity of the heterodimer coordinatively regulates PER and TIM transcription through a negative feedback loop. Behaves as a negative element in circadian transcriptional loop. Does not appear to bind DNA, suggesting indirect transcriptional inhibition. The protein is Period circadian protein (per) of Drosophila picticornis (Fruit fly).